The following is a 122-amino-acid chain: Small ribosomal subunit protein uS13 (122 aa).

The segment at 99–122 (RGQRTHTNARTRKGPAKAIAGKKK) is disordered.

This sequence belongs to the universal ribosomal protein uS13 family. As to quaternary structure, part of the 30S ribosomal subunit. Forms a loose heterodimer with protein S19. Forms two bridges to the 50S subunit in the 70S ribosome.

Located at the top of the head of the 30S subunit, it contacts several helices of the 16S rRNA. In the 70S ribosome it contacts the 23S rRNA (bridge B1a) and protein L5 of the 50S subunit (bridge B1b), connecting the 2 subunits; these bridges are implicated in subunit movement. Contacts the tRNAs in the A and P-sites. This chain is Small ribosomal subunit protein uS13, found in Cereibacter sphaeroides (strain ATCC 17025 / ATH 2.4.3) (Rhodobacter sphaeroides).